Consider the following 332-residue polypeptide: Methionyl-tRNA formyltransferase (332 aa).

124 to 127 (SLLP) lines the (6S)-5,6,7,8-tetrahydrofolate pocket.

The protein belongs to the Fmt family.

The catalysed reaction is L-methionyl-tRNA(fMet) + (6R)-10-formyltetrahydrofolate = N-formyl-L-methionyl-tRNA(fMet) + (6S)-5,6,7,8-tetrahydrofolate + H(+). Attaches a formyl group to the free amino group of methionyl-tRNA(fMet). The formyl group appears to play a dual role in the initiator identity of N-formylmethionyl-tRNA by promoting its recognition by IF2 and preventing the misappropriation of this tRNA by the elongation apparatus. The polypeptide is Methionyl-tRNA formyltransferase (Polynucleobacter necessarius subsp. necessarius (strain STIR1)).